Consider the following 358-residue polypeptide: Peptide chain release factor 1 (358 aa).

An N5-methylglutamine modification is found at Gln235. The tract at residues Lys284–Tyr309 is disordered.

The protein belongs to the prokaryotic/mitochondrial release factor family. Methylated by PrmC. Methylation increases the termination efficiency of RF1.

It localises to the cytoplasm. Peptide chain release factor 1 directs the termination of translation in response to the peptide chain termination codons UAG and UAA. This is Peptide chain release factor 1 from Bartonella tribocorum (strain CIP 105476 / IBS 506).